The chain runs to 93 residues: Probable chloroethene reductive dehalogenase membrane anchor protein (93 aa).

3 helical membrane passes run 3–23, 35–55, and 64–84; these read AIYF…FTWF, WVLG…TYAS, and SAWI…LFAA.

The protein belongs to the PceB family.

It localises to the cell membrane. May act as a membrane anchor for the chloroethene reductive dehalogenase VcrA. The polypeptide is Probable chloroethene reductive dehalogenase membrane anchor protein (Dehalococcoides mccartyi (strain VS)).